The following is a 107-amino-acid chain: Putative regulatory protein BCG9842_A0044 (107 aa).

It belongs to the RemA family.

The polypeptide is Putative regulatory protein BCG9842_A0044 (Bacillus cereus (strain G9842)).